Consider the following 446-residue polypeptide: Methanogenesis regulatory protein FilR1 (446 aa).

The Response regulatory domain maps to 297 to 416 (DVMIVEDDLG…QRLPEIAEEA (120 aa)). Asp350 is modified (4-aspartylphosphate).

Post-translationally, phosphorylated by FilI.

Member of the two-component regulatory system FilI/FilRs, which is involved in the regulation of methanogenesis. Regulates its own expression, expression of the filI-filR2 operon, and of genes involved in methanogenesis such as acs1, acs4 and mtrABC. Acts by binding to the promoters. The polypeptide is Methanogenesis regulatory protein FilR1 (Methanothrix harundinacea (strain 6Ac) (Methanosaeta harundinacea)).